A 239-amino-acid chain; its full sequence is MICOS complex subunit mic25a (239 aa).

G2 carries N-myristoyl glycine lipidation. Disordered regions lie at residues 27–88 (VKLS…KKRY) and 113–133 (DISR…ERAK). Over residues 50–78 (NKENQGHQTRTPSTSDAQAPKTQAKTTFP) the composition is skewed to polar residues. Residues 79 to 88 (DSKEELKKRY) show a composition bias toward basic and acidic residues. A coiled-coil region spans residues 79 to 166 (DSKEELKKRY…ITQLEKKNEE (88 aa)). Residues 192–234 (EPVCLNLQAQILNCYRENREQTLQCSDLAKEYMQCINAAKKNL) enclose the CHCH domain. Short sequence motifs (cx9C motif) lie at residues 195–205 (CLNLQAQILNC) and 216–226 (CSDLAKEYMQC). Disulfide bonds link C195–C226 and C205–C216.

This sequence belongs to the MICOS complex subunit Mic19 family. Metazoan Mic25 subfamily. In terms of assembly, component of the mitochondrial contact site and cristae organizing system (MICOS) complex (also known as MINOS or MitOS complex).

It is found in the mitochondrion inner membrane. Functionally, component of the MICOS complex, a large protein complex of the mitochondrial inner membrane that plays crucial roles in the maintenance of crista junctions, inner membrane architecture, and formation of contact sites to the outer membrane. The sequence is that of MICOS complex subunit mic25a (chchd6a) from Danio rerio (Zebrafish).